Here is a 383-residue protein sequence, read N- to C-terminus: Putative glutamate--cysteine ligase 2-2 (383 aa).

The segment at 35–56 is disordered; sequence RGDRDGAGGPPGGADPDGDLDG.

Belongs to the glutamate--cysteine ligase type 2 family. YbdK subfamily.

It catalyses the reaction L-cysteine + L-glutamate + ATP = gamma-L-glutamyl-L-cysteine + ADP + phosphate + H(+). In terms of biological role, ATP-dependent carboxylate-amine ligase which exhibits weak glutamate--cysteine ligase activity. The sequence is that of Putative glutamate--cysteine ligase 2-2 from Frankia alni (strain DSM 45986 / CECT 9034 / ACN14a).